The following is a 374-amino-acid chain: DNA replication and repair protein RecF (374 aa).

34–41 (GDNGAGKT) provides a ligand contact to ATP.

This sequence belongs to the RecF family.

The protein localises to the cytoplasm. In terms of biological role, the RecF protein is involved in DNA metabolism; it is required for DNA replication and normal SOS inducibility. RecF binds preferentially to single-stranded, linear DNA. It also seems to bind ATP. This chain is DNA replication and repair protein RecF, found in Rhizobium etli (strain ATCC 51251 / DSM 11541 / JCM 21823 / NBRC 15573 / CFN 42).